Here is a 285-residue protein sequence, read N- to C-terminus: Aldo-keto reductase (285 aa).

165–175 serves as a coordination point for NADP(+); the sequence is APLAGGILTGK.

This sequence belongs to the aldo/keto reductase family. Aldo/keto reductase 2 subfamily.

This Babesia bovis protein is Aldo-keto reductase.